The primary structure comprises 163 residues: MPSFDIVSEVDLQEARNGVDNAVREVESRFDFRGVEATIELNDANKTIKVLSESDFQVNQLLDILRAKLLKRGIEGASLDVPDEFVHSGKTWYVEAKLKQGIESAVQKKIVKLIKDSKLKVQAQIQGEEIRVTGKSRDDLQSVMALVRGDDLGQPFQFKNFRD.

Belongs to the YajQ family.

Functionally, nucleotide-binding protein. The chain is Nucleotide-binding protein YajQ from Salmonella typhi.